Reading from the N-terminus, the 271-residue chain is Ribosomal RNA small subunit methyltransferase J (271 aa).

S-adenosyl-L-methionine is bound by residues 116-117 (RD), 132-133 (ER), 168-169 (SS), and Asp190.

This sequence belongs to the methyltransferase superfamily. RsmJ family.

It is found in the cytoplasm. The catalysed reaction is guanosine(1516) in 16S rRNA + S-adenosyl-L-methionine = N(2)-methylguanosine(1516) in 16S rRNA + S-adenosyl-L-homocysteine + H(+). Functionally, specifically methylates the guanosine in position 1516 of 16S rRNA. The polypeptide is Ribosomal RNA small subunit methyltransferase J (Shewanella piezotolerans (strain WP3 / JCM 13877)).